Here is a 166-residue protein sequence, read N- to C-terminus: Regulator of ribonuclease activity A (166 aa).

The protein belongs to the RraA family. In terms of assembly, homotrimer. Binds to both RNA-binding sites in the C-terminal region of Rne and to RhlB.

It localises to the cytoplasm. Functionally, globally modulates RNA abundance by binding to RNase E (Rne) and regulating its endonucleolytic activity. Can modulate Rne action in a substrate-dependent manner by altering the composition of the degradosome. Modulates RNA-binding and helicase activities of the degradosome. In Histophilus somni (strain 129Pt) (Haemophilus somnus), this protein is Regulator of ribonuclease activity A.